The chain runs to 235 residues: Pyridoxine 5'-phosphate synthase (235 aa).

Residue Asn6 participates in 3-amino-2-oxopropyl phosphate binding. A 1-deoxy-D-xylulose 5-phosphate-binding site is contributed by 8–9; sequence DH. Arg17 contributes to the 3-amino-2-oxopropyl phosphate binding site. His42 functions as the Proton acceptor in the catalytic mechanism. The 1-deoxy-D-xylulose 5-phosphate site is built by Arg44 and His49. The active-site Proton acceptor is the Glu69. Thr99 serves as a coordination point for 1-deoxy-D-xylulose 5-phosphate. His188 (proton donor) is an active-site residue. 3-amino-2-oxopropyl phosphate-binding positions include Gly189 and 210-211; that span reads GH.

The protein belongs to the PNP synthase family. As to quaternary structure, homooctamer; tetramer of dimers.

The protein resides in the cytoplasm. It carries out the reaction 3-amino-2-oxopropyl phosphate + 1-deoxy-D-xylulose 5-phosphate = pyridoxine 5'-phosphate + phosphate + 2 H2O + H(+). It participates in cofactor biosynthesis; pyridoxine 5'-phosphate biosynthesis; pyridoxine 5'-phosphate from D-erythrose 4-phosphate: step 5/5. Catalyzes the complicated ring closure reaction between the two acyclic compounds 1-deoxy-D-xylulose-5-phosphate (DXP) and 3-amino-2-oxopropyl phosphate (1-amino-acetone-3-phosphate or AAP) to form pyridoxine 5'-phosphate (PNP) and inorganic phosphate. In Wolbachia pipientis subsp. Culex pipiens (strain wPip), this protein is Pyridoxine 5'-phosphate synthase.